A 392-amino-acid polypeptide reads, in one-letter code: MEVYLSEFINWKLYEFKKINELGTSTFRYYFKGKIVNLKNKRVSSNEVCYMFKLMDDTGIVELNYSLSKYSPKFEMLRQLQLGISVFVYSDVVCRVSGIRAWKLQIHSKNLESKIEATISEPEQIPCPGFGSDNIVPLSLVNDFKDGAFVNVLVAIQWKEEFEIFNNETKKSLPKQTIHVHDISGSAMIVLIGESQVKSALSWNNETILLIHNAIAYRTNTGMLELSIKDAIIQTLQSFDGKVLKLLNFSIKRKELIKINAYRLSTLEALEKIASQSGEAFGQVGVLIMQSKIKDLTKEGGLVYGNDLTGLRFADLISIIVDETGSVKNPKFSQKLLEEITNIAPTELSVLNEEQAMHLENVFLYRHYRVCVGFLNKQIYVFSSDEPLKSYI.

The protein resides in the cytoplasm. Its subcellular location is the nucleus. Functionally, has a role in meiosis. The polypeptide is Meiotically up-regulated gene 11 protein (mug11) (Schizosaccharomyces pombe (strain 972 / ATCC 24843) (Fission yeast)).